We begin with the raw amino-acid sequence, 142 residues long: Transcriptional regulator MraZ (142 aa).

2 SpoVT-AbrB domains span residues 5–48 (EFEY…PLCE) and 77–120 (AFDV…DKET).

It belongs to the MraZ family. Forms oligomers.

It is found in the cytoplasm. The protein localises to the nucleoid. This chain is Transcriptional regulator MraZ, found in Dehalococcoides mccartyi (strain ATCC BAA-2266 / KCTC 15142 / 195) (Dehalococcoides ethenogenes (strain 195)).